Here is a 620-residue protein sequence, read N- to C-terminus: MRRSCLMIRRRKRMFTAVTLLVLLVMGTSVCPVKAEGAARQMEALNRGLVAVKTDGGIFVSWRFLGTENASVLFNVYRDGQKLNAAPVKTTNYVDKNGSAGSTYTVRAVVNGTEQPASEKASVWAQPYHSVPLDKPAGGTTPKGESYTYSANDASVGDVDGDGQYELILKWDPSNSKDNSQDGYTGDVLIDAYKLDGTKLWRINLGKNIRAGAHYTQFMVYDLDGDGKAEVAMKTADGTKDGTGKVIGNANADYRNEQGRVLSGPEYLTVFQGSTGKELVTANFEPARGNVSDWGDSYGNRVDRFLAGIAYLDGQRPSLIMTRGYYAKTMLVAYNFRDGKLSKLWTLDSSKSGNEAFAGQGNHNLSIADVDGDGKDEIIFGSMAVDHDGKGMYSTGLGHGDALHTGDLDPGRPGLEVFQVHEDKNAKYGLSFRDAATGKILWGVYAGKDVGRGMAADIDPRYPGQEVWANGSLYSAKGVKIGSGVPSSTNFGIWWDGDLLREQLDSNRIDKWDYQNGVSKNMLTASGAAANNGTKATPTLQADLLGDWREEVVWRTEDSSALRIYTTTIPTEHRLYTLMHDPVYRLGIAWQNIAYNQPPHTSFFLGDGMAEQPKPNMYTP.

The signal sequence occupies residues 1–37; the sequence is MRRSCLMIRRRKRMFTAVTLLVLLVMGTSVCPVKAEG. The disordered stretch occupies residues 133 to 152; it reads LDKPAGGTTPKGESYTYSAN. Residue asparagine 152 participates in substrate binding. Aspartate 153, aspartate 158, aspartate 160, aspartate 162, glutamine 164, and glutamate 166 together coordinate Ca(2+). Residue aspartate 172 coordinates substrate. A carbohydrate-binding residues include aspartate 187 and lysine 207. Ca(2+) contacts are provided by aspartate 222, aspartate 224, aspartate 226, lysine 228, and glutamate 230. Residues glycine 238 and arginine 255 each contribute to the a carbohydrate site. Ca(2+) contacts are provided by histidine 363, aspartate 369, aspartate 371, aspartate 373, lysine 375, glutamate 377, aspartate 386, histidine 387, histidine 399, aspartate 401, aspartate 407, aspartate 409, arginine 412, glycine 414, glutamate 416, and glutamate 422. Arginine 452 provides a ligand contact to substrate. Residues aspartate 457, aspartate 459, tyrosine 462, glycine 464, glutamate 466, aspartate 496, aspartate 498, leucine 500, and glutamate 502 each contribute to the Ca(2+) site. A substrate-binding site is contributed by 532-534; that stretch reads NGT. The Ca(2+) site is built by aspartate 543, leucine 545, aspartate 547, arginine 549, glutamate 551, asparagine 592, and alanine 594. Residue tyrosine 595 coordinates substrate. Residue asparagine 596 coordinates Ca(2+).

This sequence belongs to the polysaccharide lyase 11 family. Monomer. Requires Ca(2+) as cofactor. It depends on Mn(2+) as a cofactor.

The protein localises to the secreted. The enzyme catalyses Endotype eliminative cleavage of L-alpha-rhamnopyranosyl-(1-&gt;4)-alpha-D-galactopyranosyluronic acid bonds of rhamnogalacturonan I domains in ramified hairy regions of pectin leaving L-rhamnopyranose at the reducing end and 4-deoxy-4,5-unsaturated D-galactopyranosyluronic acid at the non-reducing end.. Pectinolytic enzyme that degrades type I rhamnogalacturonan from plant cell walls and releases oligosaccharide products. Degrades rhamnogalacturonan, polygalacturonic acid, pectic acid and pectin. This is Rhamnogalacturonan endolyase YesW (yesW) from Bacillus subtilis (strain 168).